We begin with the raw amino-acid sequence, 238 residues long: Probable transglycosylase IsaA (238 aa).

An N-terminal signal peptide occupies residues 1–29; that stretch reads MKKTVIASSLAVALGVTGYALTTDNSAHA. The segment at 115–157 is disordered; that stretch reads ASTQSVSSNQQSSNTNVEAVSAPKTTSYSASTSSSSSASTGGS. Low complexity-rich tracts occupy residues 116–131 and 139–157; these read STQSVSSNQQSSNTNV and TTSYSASTSSSSSASTGGS.

It belongs to the transglycosylase family. IsaA subfamily.

Its subcellular location is the secreted. In terms of biological role, is able to cleave peptidoglycan. This chain is Probable transglycosylase IsaA (isaA), found in Staphylococcus haemolyticus (strain JCSC1435).